The sequence spans 609 residues: Alpha-glucosides permease MPH2 (609 aa).

Residues 1–106 (MKNLSFLINR…AAAWSLLVST (106 aa)) are Cytoplasmic-facing. The chain crosses the membrane as a helical span at residues 107-127 (TLIMEGYDTAILGAFYALPIF). Residues 128–142 (QRKFGSQNDKTGEWE) lie on the Extracellular side of the membrane. The helical transmembrane segment at 143–163 (ISASWQIGLTLCYMAGEIVGL) threads the bilayer. Residues 164–178 (QLTGPSVDLVGNRYT) lie on the Cytoplasmic side of the membrane. Residues 179–199 (LIIALFFLAAFTFILYFCNSL) traverse the membrane as a helical segment. Gly-200 is a topological domain (extracellular). The helical transmembrane segment at 201 to 221 (MIAVGQALCGMPWGCFQCLTV) threads the bilayer. Residues 222–234 (SYASEICPLALRY) are Cytoplasmic-facing. Residues 235–255 (YLTTYSNLCWLFGQLFAAGIM) form a helical membrane-spanning segment. The Extracellular portion of the chain corresponds to 256–270 (KNSQKKYADSELGYK). A helical membrane pass occupies residues 271–291 (LPFALQWILPVPLALGIFFAP). Residues 292 to 363 (ESPWWLVKKG…EDKINRRRTR (72 aa)) are Cytoplasmic-facing. The chain crosses the membrane as a helical span at residues 364-384 (ITCLCWAGQATCGSILIGYST). Topologically, residues 385–397 (YFYEKAGVSTEMS) are extracellular. Residues 398 to 418 (FTFSIIQYCLGICATFLSWWA) form a helical membrane-spanning segment. Residues 419–426 (SKYFGRYD) lie on the Cytoplasmic side of the membrane. Residues 427–447 (LYAFGLAFQTIVFFIIGGLGC) form a helical membrane-spanning segment. Over 448–459 (SSTHGSKMGSGS) the chain is Extracellular. A helical transmembrane segment spans residues 460 to 480 (LLMAVAFFYNLGIAPVVFCLV). Over 481-492 (SEMPSSRLRTKT) the chain is Cytoplasmic. Residues 493-513 (IILARNTYNVVSIICSVLILY) traverse the membrane as a helical segment. At 514–525 (QLNSKKWNWGAK) the chain is on the extracellular side. Residues 526-546 (SGFFWGVLCFCTLIWAVVDLP) traverse the membrane as a helical segment. The Cytoplasmic segment spans residues 547–609 (ETAGKTFVEI…QRNSNVSHHL (63 aa)).

It belongs to the major facilitator superfamily. Sugar transporter (TC 2.A.1.1) family.

It is found in the cell membrane. Functionally, high-affinity uptake of maltose and maltotriose. Also transports alpha-methylglucoside, glucose and turanose but not melezitose or trehalose. The protein is Alpha-glucosides permease MPH2 (MPH2) of Saccharomyces cerevisiae (strain ATCC 204508 / S288c) (Baker's yeast).